A 437-amino-acid chain; its full sequence is Photosystem II stability/assembly factor HCF136, chloroplastic (437 aa).

Belongs to the Ycf48 family.

Its subcellular location is the plastid. It is found in the chloroplast thylakoid membrane. Its function is as follows. Essential for photosystem II (PSII) biogenesis; required for assembly of an early intermediate in PSII assembly that includes D2 (psbD) and cytochrome b559. The sequence is that of Photosystem II stability/assembly factor HCF136, chloroplastic from Cyanidioschyzon merolae (strain NIES-3377 / 10D) (Unicellular red alga).